The chain runs to 331 residues: Olfactory receptor 6S1 (331 aa).

Residues 1–29 (MSPDGNHSSDPTEFVLAGLPNLNSARVEL) lie on the Extracellular side of the membrane. Residue Asn6 is glycosylated (N-linked (GlcNAc...) asparagine). Residues 30–50 (FSVFLLVYLLNLTGNVLIVGV) traverse the membrane as a helical segment. The Cytoplasmic portion of the chain corresponds to 51–59 (VRADTRLQT). A helical transmembrane segment spans residues 60-80 (PMYFFLGNLSCLEILLTSVII). Over 81–99 (PKMLSNFLSRQHTISFAAC) the chain is Extracellular. Residues Cys99 and Cys182 are joined by a disulfide bond. Residues 100-120 (ITQFYFYFFLGASEFLLLAVM) traverse the membrane as a helical segment. The Cytoplasmic portion of the chain corresponds to 121 to 147 (SADRYLAICHPLRYPLLMSGAVCFRVA). Residues 148-168 (LACWVGGLVPVLGPTVAVALL) form a helical membrane-spanning segment. The Extracellular segment spans residues 169 to 207 (PFCKQGAVVQHFFCDSGPLLRLACTNTKKLEETDFVLAS). The helical transmembrane segment at 208 to 228 (LVIVSSLLITAVSYGLIVLAV) threads the bilayer. Residues 229–242 (LSIPSASGRQKAFS) lie on the Cytoplasmic side of the membrane. A helical membrane pass occupies residues 243 to 263 (TCTSHLIVVTLFYGSAIFLYV). Residues 264–274 (RPSQSGSVDTN) are Extracellular-facing. Residues 275 to 295 (WAVTVITTFVTPLLNPFIYAL) traverse the membrane as a helical segment. Over 296–331 (RNEQVKEALKDMFRKVVAGVLGNLLLDKCLSEKAVK) the chain is Cytoplasmic.

It belongs to the G-protein coupled receptor 1 family.

The protein resides in the cell membrane. Its function is as follows. Odorant receptor. This Homo sapiens (Human) protein is Olfactory receptor 6S1 (OR6S1).